Here is a 329-residue protein sequence, read N- to C-terminus: Helicase VP6-A (329 aa).

2 disordered regions span residues 27-130 (INLV…TNGG) and 189-232 (DLRR…SEEP). Composition is skewed to basic and acidic residues over residues 36-58 (EGGKEDKTEPKEESKAEGSKDGE), 65-83 (GQKEEGGKETKDADVDRRI), and 96-109 (SGERANENANRGDG). Lys110 serves as a coordination point for ATP. A compositionally biased stretch (gly residues) spans 110–129 (KVGGGGGDADAGVGATGTNG). 2 stretches are compositionally biased toward basic and acidic residues: residues 189–207 (DLRRKEKNGTHAKAVERGG) and 215–232 (HGDAQREGVEEEKTSEEP).

It belongs to the reoviruses VP6 family. As to quaternary structure, homohexamer.

Its subcellular location is the virion. It carries out the reaction ATP + H2O = ADP + phosphate + H(+). ATP dependent RNA helicase essential for RNA packaging and viral transcription. Possesses ss- and dsRNA-binding capacity. The polypeptide is Helicase VP6-A (Segment-9) (Antilocapra americana (Pronghorn)).